The following is a 90-amino-acid chain: Putative membrane protein insertion efficiency factor (90 aa).

Belongs to the UPF0161 family.

The protein resides in the cell membrane. Could be involved in insertion of integral membrane proteins into the membrane. This is Putative membrane protein insertion efficiency factor from Lactococcus lactis subsp. cremoris (strain MG1363).